The sequence spans 340 residues: RNA 3'-terminal phosphate cyclase (340 aa).

ATP contacts are provided by residues glutamine 102 and 284–288 (FLGDQ). The Tele-AMP-histidine intermediate role is filled by histidine 308.

Belongs to the RNA 3'-terminal cyclase family. Type 1 subfamily.

It is found in the cytoplasm. It catalyses the reaction a 3'-end 3'-phospho-ribonucleotide-RNA + ATP = a 3'-end 2',3'-cyclophospho-ribonucleotide-RNA + AMP + diphosphate. Its function is as follows. Catalyzes the conversion of 3'-phosphate to a 2',3'-cyclic phosphodiester at the end of RNA. The mechanism of action of the enzyme occurs in 3 steps: (A) adenylation of the enzyme by ATP; (B) transfer of adenylate to an RNA-N3'P to produce RNA-N3'PP5'A; (C) and attack of the adjacent 2'-hydroxyl on the 3'-phosphorus in the diester linkage to produce the cyclic end product. The biological role of this enzyme is unknown but it is likely to function in some aspects of cellular RNA processing. The protein is RNA 3'-terminal phosphate cyclase of Thermococcus onnurineus (strain NA1).